We begin with the raw amino-acid sequence, 402 residues long: Putative FBD-associated F-box protein At5g56690 (402 aa).

Positions 1–47 (MAEISGLPDDLLVKILAFLPTKVAISTSVLSKQWRFLWMWLPKLKYD) constitute an F-box domain. The FBD domain maps to 349–401 (SWSKNQGSVPKCFLNSLETFRVKWYYSEEQEDRDFLSLIFKHARCLKSTSILH).

The polypeptide is Putative FBD-associated F-box protein At5g56690 (Arabidopsis thaliana (Mouse-ear cress)).